A 361-amino-acid polypeptide reads, in one-letter code: D-alanine--D-alanine ligase (361 aa).

The ATP-grasp domain maps to 134–344; sequence KLLLKSFNIP…FKDLVDNLIN (211 aa). Position 167-222 (167-222) interacts with ATP; the sequence is REALGYPVIVKPAVLGSSIGINVAYSENQIEFFIEEALKYDLTILIEKFIEAREIE. 3 residues coordinate Mg(2+): D297, E311, and N313.

This sequence belongs to the D-alanine--D-alanine ligase family. Mg(2+) serves as cofactor. Requires Mn(2+) as cofactor.

It localises to the cytoplasm. The enzyme catalyses 2 D-alanine + ATP = D-alanyl-D-alanine + ADP + phosphate + H(+). Its pathway is cell wall biogenesis; peptidoglycan biosynthesis. Cell wall formation. The chain is D-alanine--D-alanine ligase from Borrelia garinii subsp. bavariensis (strain ATCC BAA-2496 / DSM 23469 / PBi) (Borreliella bavariensis).